Here is a 218-residue protein sequence, read N- to C-terminus: uncharacterized protein (218 aa).

Positions tryptophan 4 to serine 207 constitute a CN hydrolase domain.

This is an uncharacterized protein from Escherichia coli (strain K12).